A 621-amino-acid polypeptide reads, in one-letter code: Chaperone protein HscA homolog (621 aa).

Belongs to the heat shock protein 70 family.

Functionally, chaperone involved in the maturation of iron-sulfur cluster-containing proteins. Has a low intrinsic ATPase activity which is markedly stimulated by HscB. The polypeptide is Chaperone protein HscA homolog (Cupriavidus metallidurans (strain ATCC 43123 / DSM 2839 / NBRC 102507 / CH34) (Ralstonia metallidurans)).